The sequence spans 250 residues: Aquaporin TIP2-1 (250 aa).

At Met-1 the chain carries N-acetylmethionine. The Cytoplasmic segment spans residues Met-1–Ala-20. N-acetylalanine; in Aquaporin TIP2-1, N-terminally processed is present on Ala-2. The helical transmembrane segment at Tyr-21–Ala-41 threads the bilayer. Residues Tyr-42–Pro-54 lie on the Vacuolar side of the membrane. A helical transmembrane segment spans residues Gly-55–Ala-75. Residues Asn-76–Val-98 lie on the Cytoplasmic side of the membrane. Positions Asn-83–Ala-85 match the NPA 1 motif. Residues Ile-99–Leu-119 form a helical membrane-spanning segment. The Vacuolar segment spans residues Lys-120–Glu-141. A helical transmembrane segment spans residues Gly-142 to Ala-162. Over Asp-163–Ser-168 the chain is Cytoplasmic. Residues Leu-169–Gly-189 traverse the membrane as a helical segment. Topologically, residues Pro-190–Trp-215 are vacuolar. The NPA 2 signature appears at Asn-197–Ala-199. The chain crosses the membrane as a helical span at residues Val-216–Phe-236. The Cytoplasmic portion of the chain corresponds to Met-237–Phe-250.

The protein belongs to the MIP/aquaporin (TC 1.A.8) family. TIP (TC 1.A.8.10) subfamily. Interacts with cucumber mosaic virus (CMV) Protein 1a. As to expression, strongly expressed in shoot, rosette, bolt and flowers. Also expressed in roots, flower buds and above ground.

The protein localises to the vacuole membrane. Functionally, aquaporin required to facilitate the transport of water from the vacuolar compartment to the cytoplasm. Does not promote glycerol permeability. Its function is impaired by Hg(2+). Transports urea in yeast cells and Xenopus laevis oocytes in a pH-independent manner. Transports methylammonium or ammonium in yeast cells and Xenopus laevis oocytes, preferentially at high medium pH. May participate in vacuolar compartmentation and detoxification of ammonium. The polypeptide is Aquaporin TIP2-1 (TIP2-1) (Arabidopsis thaliana (Mouse-ear cress)).